A 283-amino-acid chain; its full sequence is Bifunctional protein FolD (283 aa).

Residues 165–167, serine 190, and valine 231 each bind NADP(+); that span reads GRS.

The protein belongs to the tetrahydrofolate dehydrogenase/cyclohydrolase family. Homodimer. Interacts with BrxC.

The enzyme catalyses (6R)-5,10-methylene-5,6,7,8-tetrahydrofolate + NADP(+) = (6R)-5,10-methenyltetrahydrofolate + NADPH. It catalyses the reaction (6R)-5,10-methenyltetrahydrofolate + H2O = (6R)-10-formyltetrahydrofolate + H(+). It participates in one-carbon metabolism; tetrahydrofolate interconversion. Its function is as follows. Catalyzes the oxidation of 5,10-methylenetetrahydrofolate to 5,10-methenyltetrahydrofolate and then the hydrolysis of 5,10-methenyltetrahydrofolate to 10-formyltetrahydrofolate. In Bacillus subtilis (strain 168), this protein is Bifunctional protein FolD.